The sequence spans 305 residues: tRNA pseudouridine synthase B (305 aa).

The active-site Nucleophile is D39.

The protein belongs to the pseudouridine synthase TruB family. Type 1 subfamily.

It carries out the reaction uridine(55) in tRNA = pseudouridine(55) in tRNA. Functionally, responsible for synthesis of pseudouridine from uracil-55 in the psi GC loop of transfer RNAs. This Staphylococcus aureus (strain MRSA252) protein is tRNA pseudouridine synthase B.